The chain runs to 181 residues: Peptidyl-prolyl cis-trans isomerase H (181 aa).

Residues 17-180 (FFDITLGGES…QDVTIIQCGE (164 aa)) form the PPIase cyclophilin-type domain.

The protein belongs to the cyclophilin-type PPIase family. PPIase H subfamily.

The protein resides in the nucleus. It carries out the reaction [protein]-peptidylproline (omega=180) = [protein]-peptidylproline (omega=0). PPIases accelerate the folding of proteins. It catalyzes the cis-trans isomerization of proline imidic peptide bonds in oligopeptides. The sequence is that of Peptidyl-prolyl cis-trans isomerase H (cyp3) from Aspergillus oryzae (strain ATCC 42149 / RIB 40) (Yellow koji mold).